The chain runs to 186 residues: HGPRTase-like protein 3 (186 aa).

This sequence belongs to the purine/pyrimidine phosphoribosyltransferase family. Archaeal HPRT subfamily.

In terms of biological role, may catalyze a purine salvage reaction, the substrate is unknown. This is HGPRTase-like protein 3 from Haloterrigena turkmenica (strain ATCC 51198 / DSM 5511 / JCM 9101 / NCIMB 13204 / VKM B-1734 / 4k) (Halococcus turkmenicus).